A 92-amino-acid chain; its full sequence is Small ribosomal subunit protein uS19 (92 aa).

Belongs to the universal ribosomal protein uS19 family.

Functionally, protein S19 forms a complex with S13 that binds strongly to the 16S ribosomal RNA. In Clostridium botulinum (strain Eklund 17B / Type B), this protein is Small ribosomal subunit protein uS19.